The primary structure comprises 732 residues: Conidiogenone synthase (732 aa).

The segment at 1 to 311 (MADKITDEYA…SLCVPRYCKV (311 aa)) is terpene cyclase. Asp97 is a Mg(2+) binding site. Substrate is bound by residues Asp97, 169-172 (RIVD), Asn213, 217-221 (SWDKE), and 307-308 (RY). Residues 97–101 (DALNQ) carry the DDXXD 1 motif. An NSE/DTE motif is present at residues 213-221 (NDLFSWDKE). Residues 312-732 (DRNPYKDHLE…LRAMEETLQK (421 aa)) are prenyltransferase. Residues 348–370 (KQSELKDPSSSTYKSHFSPLEPN) form a disordered region. Lys402, Arg405, and His434 together coordinate isopentenyl diphosphate. Asp441 and Asp445 together coordinate Mg(2+). Positions 441–445 (DDIQD) match the DDXXD 2 motif. A dimethylallyl diphosphate-binding site is contributed by Arg450. Arg451 provides a ligand contact to isopentenyl diphosphate. The dimethylallyl diphosphate site is built by Lys529, Thr530, Gln565, Asn572, Lys582, and Lys592.

It in the N-terminal section; belongs to the terpene synthase family. This sequence in the C-terminal section; belongs to the FPP/GGPP synthase family. Hexamer. The cofactor is Mg(2+).

It carries out the reaction isopentenyl diphosphate + (2E,6E)-farnesyl diphosphate = (2E,6E,10E)-geranylgeranyl diphosphate + diphosphate. Its pathway is secondary metabolite biosynthesis; terpenoid biosynthesis. Functionally, bifunctional terpene synthase; part of the gene cluster that mediates the biosynthesis of conidiogenone, a diterpene known to induce the conidiation. The bifunctional terpene synthase PchDS converts isopentenyl diphosphate (IPP) and dimethylallyl diphosphate (DMAPP) into deoxyconidiogenol. The C-terminal prenyltransferase (PT) domain of PchDS catalyzes formation of GGPP, whereas the N-terminal terpene cyclase (TC) domain catalyzes the cyclization of GGPP into deoxyconidiogenol. The cytochrome P450 monooxygenase PchP450 then catalyzes two rounds of oxidation to furnish conidiogenone. This Penicillium rubens (strain ATCC 28089 / DSM 1075 / NRRL 1951 / Wisconsin 54-1255) (Penicillium chrysogenum) protein is Conidiogenone synthase.